The chain runs to 476 residues: Bifunctional protein HldE (476 aa).

The segment at Met-1–Thr-318 is ribokinase. Position 195–198 (Asn-195–Glu-198) interacts with ATP. The active site involves Asp-264. A cytidylyltransferase region spans residues Met-344–Gly-476.

This sequence in the N-terminal section; belongs to the carbohydrate kinase PfkB family. In the C-terminal section; belongs to the cytidylyltransferase family. As to quaternary structure, homodimer.

It carries out the reaction D-glycero-beta-D-manno-heptose 7-phosphate + ATP = D-glycero-beta-D-manno-heptose 1,7-bisphosphate + ADP + H(+). It catalyses the reaction D-glycero-beta-D-manno-heptose 1-phosphate + ATP + H(+) = ADP-D-glycero-beta-D-manno-heptose + diphosphate. It functions in the pathway nucleotide-sugar biosynthesis; ADP-L-glycero-beta-D-manno-heptose biosynthesis; ADP-L-glycero-beta-D-manno-heptose from D-glycero-beta-D-manno-heptose 7-phosphate: step 1/4. It participates in nucleotide-sugar biosynthesis; ADP-L-glycero-beta-D-manno-heptose biosynthesis; ADP-L-glycero-beta-D-manno-heptose from D-glycero-beta-D-manno-heptose 7-phosphate: step 3/4. Functionally, catalyzes the phosphorylation of D-glycero-D-manno-heptose 7-phosphate at the C-1 position to selectively form D-glycero-beta-D-manno-heptose-1,7-bisphosphate. In terms of biological role, catalyzes the ADP transfer from ATP to D-glycero-beta-D-manno-heptose 1-phosphate, yielding ADP-D-glycero-beta-D-manno-heptose. This chain is Bifunctional protein HldE, found in Vibrio cholerae serotype O1 (strain M66-2).